A 230-amino-acid chain; its full sequence is Nicotinamide riboside kinase 2 (230 aa).

9-17 (GMTNGGKTT) contributes to the ATP binding site. Mg(2+) contacts are provided by T16 and D35. D35 serves as the catalytic Proton acceptor. Substrate contacts are provided by residues 35-38 (DDFF) and 54-55 (WD). R130 is a binding site for ATP. Substrate contacts are provided by residues R131 and 136–137 (YT). ATP-binding positions include 134–136 (RNY) and 174–176 (KSR). The tract at residues 191–230 (LLNRSQESAPSPARPARTQGPGRGCGHRTARPAASQQDSM) is disordered.

The protein belongs to the uridine kinase family. NRK subfamily. In terms of assembly, monomer. Interacts with ITGB1 alone or when associated with alpha-7, but not with alpha-5. Predominantly expressed in skeletal muscle and, at a much lower level, in the heart (at protein level). No expression in brain, kidney, liver, lung, pancreas nor placenta.

The enzyme catalyses beta-nicotinamide D-riboside + ATP = beta-nicotinamide D-ribonucleotide + ADP + H(+). It carries out the reaction beta-D-ribosylnicotinate + ATP = nicotinate beta-D-ribonucleotide + ADP + H(+). It functions in the pathway cofactor biosynthesis; NAD(+) biosynthesis. Catalyzes the phosphorylation of nicotinamide riboside (NR) and nicotinic acid riboside (NaR) to form nicotinamide mononucleotide (NMN) and nicotinic acid mononucleotide (NaMN). Reduces laminin matrix deposition and cell adhesion to laminin, but not to fibronectin. Involved in the regulation of PXN at the protein level and of PXN tyrosine phosphorylation. May play a role in the regulation of terminal myogenesis. This is Nicotinamide riboside kinase 2 (NMRK2) from Homo sapiens (Human).